A 1151-amino-acid chain; its full sequence is Semaphorin-5B (1151 aa).

Over 1-1036 (MPCGFSPSPV…TDCAGFNLIH (1036 aa)) the chain is Extracellular. The Sema domain maps to 103–553 (HPTVAFEDLQ…LRDGVLRVPL (451 aa)). A glycan (N-linked (GlcNAc...) asparagine) is linked at Asn153. 2 disulfides stabilise this stretch: Cys172–Cys182 and Cys199–Cys208. N-linked (GlcNAc...) asparagine glycans are attached at residues Asn236 and Asn345. Intrachain disulfides connect Cys322/Cys425 and Cys346/Cys388. N-linked (GlcNAc...) asparagine glycosylation occurs at Asn436. One can recognise a PSI domain in the interval 555-602 (RCAAYRSQGACLGARDPYCGWDGKQQRCSTLEDSSNMSLWTQNITACP). 2 TSP type-1 domains span residues 664–720 (NGAW…TPCP) and 722–771 (PIFW…EGCP). 6 disulfide bridges follow: Cys676/Cys713, Cys680/Cys719, Cys691/Cys703, Cys734/Cys765, Cys738/Cys770, and Cys749/Cys755. O-linked (GalNAc...) threonine glycosylation is present at Thr788. TSP type-1 domains follow at residues 853–908 (SGGW…QACP), 910–965 (RGAW…QACP), and 966–1010 (EGWS…RPCP). Intrachain disulfides connect Cys865–Cys902, Cys869–Cys907, Cys880–Cys892, Cys922–Cys959, Cys926–Cys964, and Cys937–Cys949. A helical; Signal-anchor for type III membrane protein membrane pass occupies residues 1037-1057 (LVATGISCFLGSGLLTLAVYL). Residues 1058 to 1151 (SCQHCQRQSQ…SPGQRCFPNS (94 aa)) lie on the Cytoplasmic side of the membrane.

This sequence belongs to the semaphorin family.

It is found in the membrane. Functionally, may act as a positive axonal guidance cue. This Homo sapiens (Human) protein is Semaphorin-5B (SEMA5B).